The primary structure comprises 209 residues: Pyridoxal 5'-phosphate synthase subunit PdxT (209 aa).

58 to 60 (GES) is an L-glutamine binding site. The active-site Nucleophile is C90. L-glutamine is bound by residues R119 and 148–149 (IR). Active-site charge relay system residues include H185 and E187.

Belongs to the glutaminase PdxT/SNO family. As to quaternary structure, in the presence of PdxS, forms a dodecamer of heterodimers. Only shows activity in the heterodimer.

It carries out the reaction aldehydo-D-ribose 5-phosphate + D-glyceraldehyde 3-phosphate + L-glutamine = pyridoxal 5'-phosphate + L-glutamate + phosphate + 3 H2O + H(+). The catalysed reaction is L-glutamine + H2O = L-glutamate + NH4(+). It participates in cofactor biosynthesis; pyridoxal 5'-phosphate biosynthesis. Catalyzes the hydrolysis of glutamine to glutamate and ammonia as part of the biosynthesis of pyridoxal 5'-phosphate. The resulting ammonia molecule is channeled to the active site of PdxS. The chain is Pyridoxal 5'-phosphate synthase subunit PdxT from Clavibacter michiganensis subsp. michiganensis (strain NCPPB 382).